Reading from the N-terminus, the 226-residue chain is tRNA (guanine-N(1)-)-methyltransferase (226 aa).

S-adenosyl-L-methionine-binding positions include Gly-112 and 132-137; that span reads IGDYVL.

It belongs to the RNA methyltransferase TrmD family. In terms of assembly, homodimer.

Its subcellular location is the cytoplasm. The enzyme catalyses guanosine(37) in tRNA + S-adenosyl-L-methionine = N(1)-methylguanosine(37) in tRNA + S-adenosyl-L-homocysteine + H(+). In terms of biological role, specifically methylates guanosine-37 in various tRNAs. The sequence is that of tRNA (guanine-N(1)-)-methyltransferase from Flavobacterium johnsoniae (strain ATCC 17061 / DSM 2064 / JCM 8514 / BCRC 14874 / CCUG 350202 / NBRC 14942 / NCIMB 11054 / UW101) (Cytophaga johnsonae).